Reading from the N-terminus, the 693-residue chain is Elongation factor G (693 aa).

The tr-type G domain maps to 8–282 (EKTRNIGIMA…AVIDYLPSPL (275 aa)). GTP contacts are provided by residues 17 to 24 (AHIDAGKT), 81 to 85 (DTPGH), and 135 to 138 (NKMD).

This sequence belongs to the TRAFAC class translation factor GTPase superfamily. Classic translation factor GTPase family. EF-G/EF-2 subfamily.

It localises to the cytoplasm. Catalyzes the GTP-dependent ribosomal translocation step during translation elongation. During this step, the ribosome changes from the pre-translocational (PRE) to the post-translocational (POST) state as the newly formed A-site-bound peptidyl-tRNA and P-site-bound deacylated tRNA move to the P and E sites, respectively. Catalyzes the coordinated movement of the two tRNA molecules, the mRNA and conformational changes in the ribosome. This Staphylococcus carnosus (strain TM300) protein is Elongation factor G.